The chain runs to 284 residues: 4-diphosphocytidyl-2-C-methyl-D-erythritol kinase (284 aa).

Residue lysine 14 is part of the active site. Residue 98–108 (PMGGGIGGGSS) participates in ATP binding. Aspartate 140 is a catalytic residue.

The protein belongs to the GHMP kinase family. IspE subfamily.

It carries out the reaction 4-CDP-2-C-methyl-D-erythritol + ATP = 4-CDP-2-C-methyl-D-erythritol 2-phosphate + ADP + H(+). It functions in the pathway isoprenoid biosynthesis; isopentenyl diphosphate biosynthesis via DXP pathway; isopentenyl diphosphate from 1-deoxy-D-xylulose 5-phosphate: step 3/6. Its function is as follows. Catalyzes the phosphorylation of the position 2 hydroxy group of 4-diphosphocytidyl-2C-methyl-D-erythritol. This Shewanella woodyi (strain ATCC 51908 / MS32) protein is 4-diphosphocytidyl-2-C-methyl-D-erythritol kinase.